An 882-amino-acid polypeptide reads, in one-letter code: Formin-like protein 9 (882 aa).

The first 19 residues, 1–19, serve as a signal peptide directing secretion; it reads MGMAMRCVLVLFSVSPVLL. A disordered region spans residues 67 to 92; it reads SRGRRHKRYSEAPAPAPAPVPAHQAR. Residues 138 to 158 form a helical membrane-spanning segment; it reads IVALGVVGLCLVVLGVVIAAF. Disordered stretches follow at residues 178–202, 293–316, and 401–471; these read RHGSRDQRSPAATRKVSSHPSPDPL, THDSPSDSSYQSLSPDCTSRLSPK, and TMTN…PLPR. A compositionally biased stretch (low complexity) spans 298–308; the sequence is SDSSYQSLSPD. Residues 427–441 show a composition bias toward pro residues; that stretch reads KPAPPPPPQKNPPPN. The FH2 domain occupies 462-882; it reads VGKDGSPLPR…QTLNLVLPLK (421 aa).

The protein belongs to the formin-like family. Class-I subfamily.

It is found in the membrane. The protein is Formin-like protein 9 (FH9) of Oryza sativa subsp. japonica (Rice).